The sequence spans 167 residues: UPF0114 protein Tola_1474 (167 aa).

4 helical membrane-spanning segments follow: residues 15 to 35 (IMAP…IKFF), 53 to 73 (LILI…IVMV), 109 to 129 (VAAS…MNTE), and 136 to 156 (IKWY…MGYL).

This sequence belongs to the UPF0114 family.

The protein localises to the cell membrane. In Tolumonas auensis (strain DSM 9187 / NBRC 110442 / TA 4), this protein is UPF0114 protein Tola_1474.